Here is a 315-residue protein sequence, read N- to C-terminus: L-lactate dehydrogenase (315 aa).

Residues Val-12, Asp-33, and Tyr-65 each coordinate NAD(+). Substrate is bound by residues Gln-82, Arg-88, and 120-123 (NPVD). Residues 118 to 120 (ISN) and Ser-143 contribute to the NAD(+) site. 148-151 (DTSR) is a substrate binding site. Residues Arg-153 and His-168 each coordinate beta-D-fructose 1,6-bisphosphate. His-175 functions as the Proton acceptor in the catalytic mechanism. A Phosphotyrosine modification is found at Tyr-219. Thr-228 is a substrate binding site.

Belongs to the LDH/MDH superfamily. LDH family. In terms of assembly, homotetramer.

Its subcellular location is the cytoplasm. It catalyses the reaction (S)-lactate + NAD(+) = pyruvate + NADH + H(+). The protein operates within fermentation; pyruvate fermentation to lactate; (S)-lactate from pyruvate: step 1/1. Allosterically activated by fructose 1,6-bisphosphate (FBP). Its function is as follows. Catalyzes the conversion of lactate to pyruvate. This Mycoplasmopsis pulmonis (strain UAB CTIP) (Mycoplasma pulmonis) protein is L-lactate dehydrogenase.